Reading from the N-terminus, the 577-residue chain is Eukaryotic translation initiation factor 3 subunit D (577 aa).

Residues 103-177 (DSTKTRFGRG…KDYDKPQRNR (75 aa)) are disordered. The segment covering 166-177 (GWKDYDKPQRNR) has biased composition (basic and acidic residues). Positions 305-319 (TLDMVTVNENAADAP) are RNA gate. Residues 558-577 (GSFEDDGEGDVIEENVEEED) form a disordered region. Residues 560 to 577 (FEDDGEGDVIEENVEEED) are compositionally biased toward acidic residues.

Belongs to the eIF-3 subunit D family. Component of the eukaryotic translation initiation factor 3 (eIF-3) complex.

It localises to the cytoplasm. Functionally, mRNA cap-binding component of the eukaryotic translation initiation factor 3 (eIF-3) complex, which is involved in protein synthesis of a specialized repertoire of mRNAs and, together with other initiation factors, stimulates binding of mRNA and methionyl-tRNAi to the 40S ribosome. The eIF-3 complex specifically targets and initiates translation of a subset of mRNAs involved in cell proliferation. In the eIF-3 complex, eif3d specifically recognizes and binds the 7-methylguanosine cap of a subset of mRNAs. In Sclerotinia sclerotiorum (strain ATCC 18683 / 1980 / Ss-1) (White mold), this protein is Eukaryotic translation initiation factor 3 subunit D.